The sequence spans 388 residues: Sporulation-specific mitogen-activated protein kinase SMK1 (388 aa).

The Protein kinase domain maps to 38 to 337 (YEIIQFLGKG…VEQAISHPFL (300 aa)). ATP contacts are provided by residues 44–52 (LGKGAYGTV) and Lys69. Residue Asp166 is the Proton acceptor of the active site. The TXY signature appears at 207-209 (TNY).

This sequence belongs to the protein kinase superfamily. CMGC Ser/Thr protein kinase family. MAP kinase subfamily. In terms of assembly, interacts with GSC2. Mg(2+) serves as cofactor. Post-translationally, dually phosphorylated on Thr-207 and Tyr-209, which activates the enzyme.

It carries out the reaction L-seryl-[protein] + ATP = O-phospho-L-seryl-[protein] + ADP + H(+). It catalyses the reaction L-threonyl-[protein] + ATP = O-phospho-L-threonyl-[protein] + ADP + H(+). Activated by tyrosine and threonine phosphorylation. Its function is as follows. Required for spore wall assembly. Required for proper deposition of the two outer layers of the spore wall, the chitosan and dityrosine layers. Negatively regulates GSC2, an alternate catalytic subunit of the 1,3-beta-glucan synthase (GS). Participates in a developmentally regulated signal transduction pathway that coordinates cytodifferentiation events with the transcriptional program. This is Sporulation-specific mitogen-activated protein kinase SMK1 (SMK1) from Saccharomyces cerevisiae (strain ATCC 204508 / S288c) (Baker's yeast).